A 184-amino-acid polypeptide reads, in one-letter code: Putative rRNA methyltransferase YlbH (184 aa).

Residues 1–22 (MRVISGSKKGRSLKAVAGTSTR) form a disordered region.

The protein belongs to the methyltransferase superfamily. RsmD family.

May catalyze the S-adenosyl-L-methionine-dependent methylation of a specific base in rRNA. This is Putative rRNA methyltransferase YlbH (ylbH) from Bacillus subtilis (strain 168).